A 94-amino-acid chain; its full sequence is uncharacterized protein (94 aa).

The protein belongs to the phage portal family. HK97 subfamily.

This is an uncharacterized protein from Rickettsia conorii (strain ATCC VR-613 / Malish 7).